Here is a 570-residue protein sequence, read N- to C-terminus: Protein FAM227A (570 aa).

Positions 87-99 (LREKTRSSPEDKV) are enriched in basic and acidic residues. Disordered stretches follow at residues 87 to 112 (LREK…CKGS), 336 to 374 (PAQS…QNTA), and 519 to 570 (KAAD…TSKP). Y343 is modified (phosphotyrosine). A compositionally biased stretch (polar residues) spans 345 to 362 (PQSSSANSPSEKTSSAKQ). 2 positions are modified to phosphoserine: S348 and S349. Basic and acidic residues-rich tracts occupy residues 363 to 374 (NSEKSLRMQNTA) and 540 to 562 (SPDK…EVEH).

This sequence belongs to the FAM227 family.

The polypeptide is Protein FAM227A (FAM227A) (Homo sapiens (Human)).